We begin with the raw amino-acid sequence, 94 residues long: Small ribosomal subunit protein uS19c (94 aa).

It belongs to the universal ribosomal protein uS19 family.

It is found in the plastid. Protein S19 forms a complex with S13 that binds strongly to the 16S ribosomal RNA. In Epifagus virginiana (Beechdrops), this protein is Small ribosomal subunit protein uS19c (rps19).